The sequence spans 1111 residues: MTLTSPPRTRADSRHSWVPAAAGWTVGVIATLSLIASVSPLVRWIIRVPREFVNDYIFNFPDTSFAWAFVLALLAGALAARKRIAWWILLLYMVAAVGWNVADLLTGDESVVEEMGEVIGLAFHLAAVAFLLLARPLFWARVRRGALFKAAGVLAAGMAVGVLVGWGLLELFPGDLERDYRLAYAANRVFAFAGVDPDAFDGQHPHVVVNALLGLFGALALMAAAIVLFQSQRSENALTGEDESAIRGLLELYGKNDSLGYFATRRDKSVVFAPNGRAAITYRVEVGVCLASGDPVGDPKAWPQAIDAWLALCGTYGWAPGVMGASVGGAEAFRAAGLSAIQLGDEAILHPDSFRLSGPDMRAVRQAVTRARRAGVTVRIRRHRELSPEQMAEVIAHADAWRDTETERGFSMALGRLGDPADSDCLLVEAVQGETGGERSDPGSGTVVAMLSLVPWGSNGASLDVMRRSPQSPNGTIELMVSELCMQAEDIGVTRISLNFAMFRSAFEQGAQLGAGPVARLWRWLLVFFSRWWQLETLYRSNMKYQPQWVPRYACYEDARLIPRVGVASVIAEGFLVLPFSRRNKQHTGHHTSAPQDLVASGVLHHDGTAPDMSGLRTDTADDEPPRLPEQVRVRMAKLKALQADGVDAYPVGRPPSHTAAAAVDSPDDVELDVAGRVLRIRDYGGVLFAQLRDWSGEVQLLLDNSTLEQGSTADFTAAIDLGDLIEATGTMGYSKNGTRSLLVRHWRLTGKCLRPLPDKWKGLTDQEARVRARYVDLAVNTEARDLIRARSGVLHAIRDTLYHKGFLEVETPILQQIHGGANARPFLTHINAYDLDLYLRIAPELYLKRLCVGGVERVFELGRAFRNEGVDFSHNPEFTLLEAYQAHADYHVWIDGCRELIQNAAMAANGEHVFLRPRDDGVLEPVDISGPWTVKTVHDAVSEALGEHIDAATELPTLRKLADAAGIPYLTHWDEGAVVLEMYEHLVEDRTEKPTFYKDFPTSVSPLTRPHRSIAGVAERWDLVAWGVELGTAYSELTDPVEQRRRLQAQSLLAAGGDPEAMELDEDFLQAMEYAMPPTGGLGMGVDRVVMLITGRSIRETLPFPLARPR.

The tract at residues 1–612 (MTLTSPPRTR…VLHHDGTAPD (612 aa)) is phosphatidylglycerol lysyltransferase. The next 7 membrane-spanning stretches (helical) occupy residues 18–38 (VPAAAGWTVGVIATLSLIASV), 60–80 (FPDTSFAWAFVLALLAGALAA), 84–104 (IAWWILLLYMVAAVGWNVADL), 118–138 (VIGLAFHLAAVAFLLLARPLF), 152–172 (GVLAAGMAVGVLVGWGLLELF), 209–229 (VNALLGLFGALALMAAAIVLF), and 308–328 (AWLALCGTYGWAPGVMGASVG). The segment at 613 to 1111 (MSGLRTDTAD…TLPFPLARPR (499 aa)) is lysine--tRNA ligase. The OB DNA-binding region spans 674 to 747 (VAGRVLRIRD…GTRSLLVRHW (74 aa)). Residues Asp-1023 and Glu-1030 each contribute to the Mg(2+) site.

It in the N-terminal section; belongs to the LPG synthetase family. The protein in the C-terminal section; belongs to the class-II aminoacyl-tRNA synthetase family. Mg(2+) is required as a cofactor.

The protein localises to the cell membrane. The catalysed reaction is tRNA(Lys) + L-lysine + ATP = L-lysyl-tRNA(Lys) + AMP + diphosphate. It carries out the reaction L-lysyl-tRNA(Lys) + a 1,2-diacyl-sn-glycero-3-phospho-(1'-sn-glycerol) = a 1,2-diacyl-sn-glycero-3-phospho-1'-(3'-O-L-lysyl)-sn-glycerol + tRNA(Lys). In terms of biological role, catalyzes the production of L-lysyl-tRNA(Lys)transfer and the transfer of a lysyl group from L-lysyl-tRNA(Lys) to membrane-bound phosphatidylglycerol (PG), which produces lysylphosphatidylglycerol (LPG), one of the components of the bacterial membrane with a positive net charge. LPG synthesis contributes to the resistance to cationic antimicrobial peptides (CAMPs) and likely protects M.tuberculosis against the CAMPs produced by competiting microorganisms (bacteriocins). In fact, the modification of anionic phosphatidylglycerol with positively charged L-lysine results in repulsion of the peptides. The protein is Lysylphosphatidylglycerol biosynthesis bifunctional protein LysX (lysX) of Mycobacterium sp. (strain JLS).